We begin with the raw amino-acid sequence, 653 residues long: Fusexin 1 (653 aa).

The N-terminal stretch at 1-23 is a signal peptide; it reads MKNGLKASVVALFFLLAASSASA. At 24–559 the chain is on the extracellular side; it reads ATNSVDTVTY…MEKALSGNAG (536 aa). 4 disulfide bridges follow: C126–C166, C397–C440, C467–C490, and C502–C519. The segment at 154-159 is fusion loop; the sequence is DTWTGQ. The chain crosses the membrane as a helical span at residues 560-580; the sequence is ALTWAQLLLSFIGFLAGFALV. Residues 581-600 are Cytoplasmic-facing; sequence GVKLGKMVDGLATEFIPLSD. Transmembrane regions (helical) follow at residues 601-621 and 622-642; these read AVVR…AVYQ and LVTN…TGYL. Over 643–653 the chain is Cytoplasmic; that stretch reads YLKGTTPDINL.

Belongs to the HAP2/GCS1 family. Fusexin 1 subfamily. As to quaternary structure, homotrimer stabilized by interdomain contacts and numerous Ca(2+) and Na(+) ions.

The protein localises to the cell surface. The protein resides in the cell membrane. Its function is as follows. Exhibits fusogenic activity. Mediates cell-cell fusion in mammalian cells (bilateral fusion). This Haloferax sp. (strain Q22) protein is Fusexin 1.